The chain runs to 224 residues: Probable 2' cyclic ADP-D-ribose synthase BdTIR (224 aa).

In terms of domain architecture, TIR spans 51–178; it reads SRYEVFINHR…RFKFALREAK (128 aa). NAD(+)-binding positions include 60–65 and glycine 93; that span reads RGVDTK. Glutamate 127 is an active-site residue.

In terms of assembly, homodimer.

It carries out the reaction NAD(+) + H2O = ADP-D-ribose + nicotinamide + H(+). The enzyme catalyses NADP(+) + H2O = ADP-D-ribose 2'-phosphate + nicotinamide + H(+). The catalysed reaction is NAD(+) = 2'cADPR + nicotinamide + H(+). Functionally, an NAD(+) hydrolase (NADase). Upon activation catalyzes cleavage of NAD(+) into ADP-D-ribose (ADPR) and nicotinamide; NAD(+) cleavage triggers a defense system that promotes cell death. In addition to ADPR, also generates a cyclization variant of cyclic ADPR termed v-cADPR (2'cADPR). Also hydrolyzes NADP(+), but not other NAD(+)-related molecules. v-cADPR activates ThsA, an NAD(+) hydrolase in B.cereus (AC J8G6Z1). Probably makes 2'cADPR; the cADPR made by this protein is bound by cmTad1 (AC P0DW61) and activates ThsA from B.cereus. Boiling cmTad1 bound to the cyclic nucleotide releases 2'cADPR, strongly suggesting it is the product of this protein. The polypeptide is Probable 2' cyclic ADP-D-ribose synthase BdTIR (Brachypodium distachyon (Purple false brome)).